The primary structure comprises 727 residues: Adhesion G protein-coupled receptor L4 (727 aa).

Residues 1–19 (MKLLLFAAWFSSLLDPCRF) form the signal peptide. Residues 20–467 (LDICQSCHPN…LAHYNVLTRI (448 aa)) lie on the Extracellular side of the membrane. The EGF-like 1; calcium-binding domain maps to 52 to 90 (DDNECETVPEICGLHANCTNYVGGYYCNCLSGFISNGTE). Cystine bridges form between Cys-56/Cys-69, Cys-63/Cys-78, Cys-106/Cys-118, Cys-112/Cys-127, Cys-408/Cys-438, and Cys-426/Cys-440. Positions 102–139 (DINECEEDRKCGPNSKCHNNIGSFICSCLRGYTSPAGP) constitute an EGF-like 2; calcium-binding domain. The region spanning 282–456 (TQMQVHAGDV…AILMSSARAN (175 aa)) is the GAIN-B domain. The segment at 408-456 (CAFWEYSPSMMGHWSLDGCIRTRVNTTHTSCSCNHLTHFAILMSSARAN) is GPS. The helical transmembrane segment at 468 to 488 (TQLGMVISLICLSMCIFTFWF) threads the bilayer. Residues 489–496 (FRDIQNTR) lie on the Cytoplasmic side of the membrane. The helical transmembrane segment at 497-517 (TTIHKNLCCSLFMAQFIFLIG) threads the bilayer. The Extracellular segment spans residues 518-535 (INKSAHKWFCSLIAGLLH). A helical transmembrane segment spans residues 536–556 (YFFLAAFAWMCIEGIHLYLIV). Over 557–568 (VGVIYNKGFLHR) the chain is Cytoplasmic. Residues 569-589 (NFYAFGYGSPAVVVAISATLG) traverse the membrane as a helical segment. At 590-609 (YKYYGTSSVCWLSTENNFIW) the chain is on the extracellular side. Residues 610-630 (SFIGPAILIILVNLLAFAVII) form a helical membrane-spanning segment. Topologically, residues 631 to 654 (YKVYRHTAVKKPEISHYENIRSCA) are cytoplasmic. Residues 655 to 675 (RGAIALLFVLGVTWAFGVMYI) traverse the membrane as a helical segment. The Extracellular segment spans residues 676-682 (LYETTLT). Residues 683–703 (AYLFTFANVFQGMFIFIFLCV) traverse the membrane as a helical segment.

It belongs to the G-protein coupled receptor 2 family. Adhesion G-protein coupled receptor (ADGR) subfamily. As to quaternary structure, heterodimer of 2 chains generated by proteolytic processing; the large extracellular N-terminal fragment and the membrane-bound C-terminal fragment predominantly remain associated and non-covalently linked. In terms of processing, autoproteolytically processed at the GPS region of the GAIN-B domain; this cleavage modulates receptor activity.

The protein resides in the cell membrane. Functionally, orphan receptor that plays a role in vessel formation. This is Adhesion G protein-coupled receptor L4 from Danio rerio (Zebrafish).